The sequence spans 450 residues: tRNA modification GTPase MnmE (450 aa).

Positions 23, 81, and 120 each coordinate (6S)-5-formyl-5,6,7,8-tetrahydrofolate. A TrmE-type G domain is found at 216–373 (GIHLVLAGKP…LLKKIATLAG (158 aa)). Residues 226–231 (NAGKSS), 245–251 (TPQAGTT), 270–273 (DTAG), and 337–340 (NKAD) contribute to the GTP site. Positions 230 and 251 each coordinate Mg(2+). K450 serves as a coordination point for (6S)-5-formyl-5,6,7,8-tetrahydrofolate.

This sequence belongs to the TRAFAC class TrmE-Era-EngA-EngB-Septin-like GTPase superfamily. TrmE GTPase family. In terms of assembly, homodimer. Heterotetramer of two MnmE and two MnmG subunits. K(+) serves as cofactor.

Its subcellular location is the cytoplasm. Functionally, exhibits a very high intrinsic GTPase hydrolysis rate. Involved in the addition of a carboxymethylaminomethyl (cmnm) group at the wobble position (U34) of certain tRNAs, forming tRNA-cmnm(5)s(2)U34. This is tRNA modification GTPase MnmE from Dichelobacter nodosus (strain VCS1703A).